We begin with the raw amino-acid sequence, 244 residues long: Acetoacetate decarboxylase (244 aa).

Catalysis depends on lysine 115, which acts as the Schiff-base intermediate with acetoacetate.

The protein belongs to the ADC family.

The catalysed reaction is acetoacetate + H(+) = acetone + CO2. In terms of biological role, catalyzes the conversion of acetoacetate to acetone and carbon dioxide. The chain is Acetoacetate decarboxylase from Streptomyces nogalater.